The following is a 226-amino-acid chain: 2-C-methyl-D-erythritol 4-phosphate cytidylyltransferase (226 aa).

The protein belongs to the IspD/TarI cytidylyltransferase family. IspD subfamily.

It carries out the reaction 2-C-methyl-D-erythritol 4-phosphate + CTP + H(+) = 4-CDP-2-C-methyl-D-erythritol + diphosphate. It functions in the pathway isoprenoid biosynthesis; isopentenyl diphosphate biosynthesis via DXP pathway; isopentenyl diphosphate from 1-deoxy-D-xylulose 5-phosphate: step 2/6. Its function is as follows. Catalyzes the formation of 4-diphosphocytidyl-2-C-methyl-D-erythritol from CTP and 2-C-methyl-D-erythritol 4-phosphate (MEP). The chain is 2-C-methyl-D-erythritol 4-phosphate cytidylyltransferase from Rhodococcus jostii (strain RHA1).